We begin with the raw amino-acid sequence, 118 residues long: Putative pterin-4-alpha-carbinolamine dehydratase (118 aa).

This sequence belongs to the pterin-4-alpha-carbinolamine dehydratase family.

The catalysed reaction is (4aS,6R)-4a-hydroxy-L-erythro-5,6,7,8-tetrahydrobiopterin = (6R)-L-erythro-6,7-dihydrobiopterin + H2O. This chain is Putative pterin-4-alpha-carbinolamine dehydratase, found in Pseudomonas fluorescens (strain SBW25).